The chain runs to 953 residues: Communesin biosynthesis cluster-specific transcription factor cnsN (953 aa).

A disordered region spans residues 371-418 (ELESTSPRTSHSSLSQDDTASLHSRSSLSSSPGRFPPSQKLVATSDSP). Residues 374 to 408 (STSPRTSHSSLSQDDTASLHSRSSLSSSPGRFPPS) are compositionally biased toward low complexity.

It localises to the nucleus. Functionally, transcriptional regulator; part of the gene cluster that mediates the biosynthesis of communesins, a prominent class of indole alkaloids with great potential as pharmaceuticals. This chain is Communesin biosynthesis cluster-specific transcription factor cnsN, found in Penicillium expansum (Blue mold rot fungus).